Consider the following 315-residue polypeptide: Olfactory receptor 8J3 (315 aa).

Residues 1–25 (MAPENFTRVTEFILTGVSSCPELQI) are Extracellular-facing. Asparagine 5 carries an N-linked (GlcNAc...) asparagine glycan. The chain crosses the membrane as a helical span at residues 26–46 (PLFLVFLVLYVLTMAGNLGII). The Cytoplasmic segment spans residues 47-54 (TLTSVDSR). The helical transmembrane segment at 55–75 (LQNPMYFFLRHLAIINLGNST) threads the bilayer. Over 76 to 99 (VIAPKMLMNFLVKKKTTSFYECAT) the chain is Extracellular. A disulfide bridge connects residues cysteine 97 and cysteine 189. A helical transmembrane segment spans residues 100 to 120 (QLGGFLFFIVSEVMMLAVMAY). At 121 to 139 (DRYVAICNPLLYMVVVSRR) the chain is on the cytoplasmic side. Residues 140–160 (LCLLLVSLTYLYGFSTAIVVS) traverse the membrane as a helical segment. At 161–197 (PCIFSVSYCSSNIINHFYCDIAPLLALSCSDTYIPET) the chain is on the extracellular side. Residues 198–217 (IVFISAATNLVFSMITVLVS) form a helical membrane-spanning segment. At 218–237 (YFNIVLSILRIRSPEGRKKA) the chain is on the cytoplasmic side. Residues 238-258 (FSTCASHMIAVTVFYGTMLFM) form a helical membrane-spanning segment. Over 259–271 (YLQPQTNHSLDTD) the chain is Extracellular. An N-linked (GlcNAc...) asparagine glycan is attached at asparagine 265. The helical transmembrane segment at 272 to 292 (KMASVFYTLVIPMLNPLIYSL) threads the bilayer. Topologically, residues 293–315 (RNNDVNVALKKFMENPCYSFKSM) are cytoplasmic.

The protein belongs to the G-protein coupled receptor 1 family.

It localises to the cell membrane. Functionally, odorant receptor. This Homo sapiens (Human) protein is Olfactory receptor 8J3 (OR8J3).